Reading from the N-terminus, the 312-residue chain is Olfactory receptor 10D3 (312 aa).

At 1 to 26 the chain is on the extracellular side; the sequence is MEVKNCCMVTEFILLGIPHTEGLEMT. A helical transmembrane segment spans residues 27–47; it reads LFVLFLPFYACTLLGNVSILV. Residues 48–57 are Cytoplasmic-facing; sequence AVMSSARLHT. Residues 58–78 form a helical membrane-spanning segment; that stretch reads PMYFFLGNLSVFDMGFSSVTC. Over 79–97 the chain is Extracellular; the sequence is PKMLLYLMGLSRLISYKDC. Cysteine 97 and cysteine 179 are joined by a disulfide. Residues 98 to 118 traverse the membrane as a helical segment; it reads VCQLFFFHFLGSIECFLFTVM. Over 119 to 139 the chain is Cytoplasmic; the sequence is AYDRFTAICYPLRYTVIMNPR. A helical transmembrane segment spans residues 140 to 160; the sequence is ICVALAVGTWLLGCIHSSILT. Residues 161-197 are Extracellular-facing; that stretch reads SLTFTLPYCGPNEVDHFFCDIPALLPLACADTSLAQR. A helical transmembrane segment spans residues 198-218; that stretch reads VSFTNVGLISLVCFLLILLSY. Over 219-239 the chain is Cytoplasmic; the sequence is TRITISILSIRTTEGRRRAFS. Residues 240 to 260 form a helical membrane-spanning segment; the sequence is TCSAHLIAILCAYGPIITVYL. Topologically, residues 261 to 266 are extracellular; it reads QPTPNP. Residues 267–287 form a helical membrane-spanning segment; that stretch reads MLGTVVQILMNLVGPMLNPLI. The Cytoplasmic segment spans residues 288–312; the sequence is YTLRNKEVKTALKTILHRTGHVPES.

This sequence belongs to the G-protein coupled receptor 1 family.

It is found in the cell membrane. Odorant receptor. In Homo sapiens (Human), this protein is Olfactory receptor 10D3.